A 324-amino-acid chain; its full sequence is UDP-N-acetylenolpyruvoylglucosamine reductase (324 aa).

An FAD-binding PCMH-type domain is found at 39-220; that stretch reads RTGGLAELFY…RAAMHEVALH (182 aa). Arginine 185 is a catalytic residue. Serine 234 functions as the Proton donor in the catalytic mechanism. The active site involves glutamate 304.

Belongs to the MurB family. FAD serves as cofactor.

Its subcellular location is the cytoplasm. The catalysed reaction is UDP-N-acetyl-alpha-D-muramate + NADP(+) = UDP-N-acetyl-3-O-(1-carboxyvinyl)-alpha-D-glucosamine + NADPH + H(+). The protein operates within cell wall biogenesis; peptidoglycan biosynthesis. Functionally, cell wall formation. The chain is UDP-N-acetylenolpyruvoylglucosamine reductase from Bartonella bacilliformis (strain ATCC 35685 / KC583 / Herrer 020/F12,63).